Reading from the N-terminus, the 741-residue chain is uncharacterized protein (741 aa).

The stretch at Val64–Val103 forms a coiled coil. Over residues Phe137–Leu155 the composition is skewed to polar residues. 3 disordered regions span residues Phe137 to Pro214, Arg280 to Ser318, and Ser330 to Pro364. Composition is skewed to low complexity over residues Arg161–Thr173 and Lys197–Ala209. The span at Ser298 to Pro308 shows a compositional bias: polar residues. 2 stretches are compositionally biased toward low complexity: residues Ser309 to Ser318 and Ser330 to Ser344. Positions Pro346 to Ala356 are enriched in polar residues. Gly499–Thr506 provides a ligand contact to ATP.

The protein belongs to the AAA ATPase family.

It is found in the cytoplasm. The protein resides in the nucleus. This is an uncharacterized protein from Schizosaccharomyces pombe (strain 972 / ATCC 24843) (Fission yeast).